Reading from the N-terminus, the 1104-residue chain is Ankyrin repeat- and BTB/POZ domain-containing protein 3 (1104 aa).

A helical membrane pass occupies residues 168–188 (IVLSWGLAAHCTAAALAALSL). The interval 260–301 (SCSGPGSGSGSGPGPSSGPGAAPAADKEREAPGGGAASGGAC) is disordered. Over residues 264–276 (PGSGSGSGPGPSS) the composition is skewed to gly residues. ANK repeat units lie at residues 603 to 632 (QGMT…DLNV), 649 to 678 (RHWT…KVEG), 687 to 716 (YSET…DPLI), 730 to 759 (GDMN…KEKS), and 825 to 854 (TWLE…TIQE). Residues 923-989 (SDVTFLVEGR…LYYGGPESLL (67 aa)) form the BTB domain.

It is found in the membrane. The sequence is that of Ankyrin repeat- and BTB/POZ domain-containing protein 3 from Homo sapiens (Human).